We begin with the raw amino-acid sequence, 194 residues long: Protein GrpE (194 aa).

A disordered region spans residues 1 to 40 (MSRKHHKEQEEIQEQETISAGAAETPAEETAAIPAATEAD). Low complexity predominate over residues 20 to 38 (AGAAETPAEETAAIPAATE).

Belongs to the GrpE family. Homodimer.

It is found in the cytoplasm. In terms of biological role, participates actively in the response to hyperosmotic and heat shock by preventing the aggregation of stress-denatured proteins, in association with DnaK and GrpE. It is the nucleotide exchange factor for DnaK and may function as a thermosensor. Unfolded proteins bind initially to DnaJ; upon interaction with the DnaJ-bound protein, DnaK hydrolyzes its bound ATP, resulting in the formation of a stable complex. GrpE releases ADP from DnaK; ATP binding to DnaK triggers the release of the substrate protein, thus completing the reaction cycle. Several rounds of ATP-dependent interactions between DnaJ, DnaK and GrpE are required for fully efficient folding. This chain is Protein GrpE, found in Chlorobaculum tepidum (strain ATCC 49652 / DSM 12025 / NBRC 103806 / TLS) (Chlorobium tepidum).